The chain runs to 83 residues: Colicin-E5 immunity protein in ColE9 (83 aa).

The sequence is that of Colicin-E5 immunity protein in ColE9 from Escherichia coli.